A 381-amino-acid chain; its full sequence is PqqA peptide cyclase (381 aa).

In terms of domain architecture, Radical SAM core spans 12–228 (VGPPLWLLAE…AEYRQRLAAE (217 aa)). [4Fe-4S] cluster contacts are provided by Cys26, Cys30, and Cys33.

It belongs to the radical SAM superfamily. PqqE family. As to quaternary structure, interacts with PqqD. The interaction is necessary for activity of PqqE. The cofactor is [4Fe-4S] cluster.

It catalyses the reaction [PQQ precursor protein] + S-adenosyl-L-methionine = E-Y cross-linked-[PQQ precursor protein] + 5'-deoxyadenosine + L-methionine + H(+). It participates in cofactor biosynthesis; pyrroloquinoline quinone biosynthesis. Its function is as follows. Catalyzes the cross-linking of a glutamate residue and a tyrosine residue in the PqqA protein as part of the biosynthesis of pyrroloquinoline quinone (PQQ). In Pseudomonas aeruginosa (strain LESB58), this protein is PqqA peptide cyclase.